The chain runs to 423 residues: Gamma-glutamyl phosphate reductase (423 aa).

It belongs to the gamma-glutamyl phosphate reductase family.

The protein localises to the cytoplasm. It carries out the reaction L-glutamate 5-semialdehyde + phosphate + NADP(+) = L-glutamyl 5-phosphate + NADPH + H(+). It functions in the pathway amino-acid biosynthesis; L-proline biosynthesis; L-glutamate 5-semialdehyde from L-glutamate: step 2/2. In terms of biological role, catalyzes the NADPH-dependent reduction of L-glutamate 5-phosphate into L-glutamate 5-semialdehyde and phosphate. The product spontaneously undergoes cyclization to form 1-pyrroline-5-carboxylate. This chain is Gamma-glutamyl phosphate reductase, found in Paracoccus denitrificans (strain Pd 1222).